The sequence spans 164 residues: 6,7-dimethyl-8-ribityllumazine synthase 1 (164 aa).

Residues F27, S58–E60, and T87–I89 contribute to the 5-amino-6-(D-ribitylamino)uracil site. Residue D92–T93 participates in (2S)-2-hydroxy-3-oxobutyl phosphate binding. The active-site Proton donor is H95. N120 serves as a coordination point for 5-amino-6-(D-ribitylamino)uracil. R134 provides a ligand contact to (2S)-2-hydroxy-3-oxobutyl phosphate.

Belongs to the DMRL synthase family. As to quaternary structure, homopentamer.

It catalyses the reaction (2S)-2-hydroxy-3-oxobutyl phosphate + 5-amino-6-(D-ribitylamino)uracil = 6,7-dimethyl-8-(1-D-ribityl)lumazine + phosphate + 2 H2O + H(+). The protein operates within cofactor biosynthesis; riboflavin biosynthesis; riboflavin from 2-hydroxy-3-oxobutyl phosphate and 5-amino-6-(D-ribitylamino)uracil: step 1/2. Catalyzes the formation of 6,7-dimethyl-8-ribityllumazine by condensation of 5-amino-6-(D-ribitylamino)uracil with 3,4-dihydroxy-2-butanone 4-phosphate. This is the penultimate step in the biosynthesis of riboflavin. This chain is 6,7-dimethyl-8-ribityllumazine synthase 1 (ribH1), found in Mesorhizobium japonicum (strain LMG 29417 / CECT 9101 / MAFF 303099) (Mesorhizobium loti (strain MAFF 303099)).